Here is a 75-residue protein sequence, read N- to C-terminus: Small ribosomal subunit protein bS18 (75 aa).

This sequence belongs to the bacterial ribosomal protein bS18 family. Part of the 30S ribosomal subunit. Forms a tight heterodimer with protein bS6.

Binds as a heterodimer with protein bS6 to the central domain of the 16S rRNA, where it helps stabilize the platform of the 30S subunit. The sequence is that of Small ribosomal subunit protein bS18 from Shewanella baltica (strain OS223).